A 516-amino-acid polypeptide reads, in one-letter code: Na(+)/H(+) antiporter NhaB (516 aa).

Transmembrane regions (helical) follow at residues Leu23–Ala43, Cys61–Thr80, Leu97–Phe117, Leu120–Phe140, Phe144–Ile164, Leu202–Pro222, Phe238–Leu258, Ala303–Ile323, Thr348–Ile368, Leu391–Val411, Ala447–Ile467, and Val475–Phe495.

The protein belongs to the NhaB Na(+)/H(+) (TC 2.A.34) antiporter family.

It localises to the cell inner membrane. It catalyses the reaction 2 Na(+)(in) + 3 H(+)(out) = 2 Na(+)(out) + 3 H(+)(in). In terms of biological role, na(+)/H(+) antiporter that extrudes sodium in exchange for external protons. In Klebsiella pneumoniae subsp. pneumoniae (strain ATCC 700721 / MGH 78578), this protein is Na(+)/H(+) antiporter NhaB.